The sequence spans 239 residues: Ribonuclease PH (239 aa).

Phosphate is bound by residues Arg88 and 126 to 128 (GTR).

This sequence belongs to the RNase PH family. As to quaternary structure, homohexameric ring arranged as a trimer of dimers.

It catalyses the reaction tRNA(n+1) + phosphate = tRNA(n) + a ribonucleoside 5'-diphosphate. In terms of biological role, phosphorolytic 3'-5' exoribonuclease that plays an important role in tRNA 3'-end maturation. Removes nucleotide residues following the 3'-CCA terminus of tRNAs; can also add nucleotides to the ends of RNA molecules by using nucleoside diphosphates as substrates, but this may not be physiologically important. Probably plays a role in initiation of 16S rRNA degradation (leading to ribosome degradation) during starvation. The polypeptide is Ribonuclease PH (Coxiella burnetii (strain Dugway 5J108-111)).